Reading from the N-terminus, the 239-residue chain is Endoglucanase A (239 aa).

The N-terminal stretch at 1-16 (MKLSMTLSLFAATAMG) is a signal peptide.

The protein belongs to the glycosyl hydrolase 12 (cellulase H) family.

It catalyses the reaction Endohydrolysis of (1-&gt;4)-beta-D-glucosidic linkages in cellulose, lichenin and cereal beta-D-glucans.. In terms of biological role, has carboxylmethylcellulase activity. This Aspergillus kawachii (strain NBRC 4308) (White koji mold) protein is Endoglucanase A (cekA).